The primary structure comprises 305 residues: MTWLPLNPIPLKDRVSMIFLQYGQIDVIDGAFVLIDKTGIRTHIPVGSVACIMLEPGTRVSHAAVRLAAQVGTLLVWVGEAGVRVYASGQPGGARSDKLLYQAKLALDEDLRLKVVRKMFELRFGEPAPARRSVEQLRGIEGSRVRATYALLAKQYGVTWNGRRYDPKDWEKGDTINQCISAATSCLYGVTEAAILAAGYAPAIGFVHTGKPLSFVYDIADIIKFDTVVPKAFEIARRNPGEPDREVRLACRDIFRSSKTLAKLIPLIEDVLAAGEIQPPAPPEDAQPVAIPLPVSLGDAGHRSS.

A sufficient for cleavage of ssRNA, ssDNA and Holliday junction DNA region spans residues 96 to 278; that stretch reads SDKLLYQAKL…EDVLAAGEIQ (183 aa). Positions 141, 208, and 221 each coordinate Mg(2+). The segment at 278–305 is disordered; it reads QPPAPPEDAQPVAIPLPVSLGDAGHRSS.

The protein belongs to the CRISPR-associated endonuclease Cas1 family. Homodimer. Part of the Cas1-Cas2 complex. Interacts with RecB, RecC, RuvB, CasC and CasE. Forms a hexamer with 2 Cas1 dimers sandwiching a Cas2 dimer. The DNA lies across a flat surface extending from 1 Cas1 dimer, across the Cas2 dimer and contacting the other Cas1 dimer. Only 1 Cas1 protein from each dimer is catalytic, the other interacts with the Cas2 dimer and possibly target DNA. The cofactor is Mg(2+).

It is found in the cytoplasm. With respect to regulation, nuclease activity partially inhibited by CasE. In terms of biological role, CRISPR (clustered regularly interspaced short palindromic repeat), is an adaptive immune system that provides protection against mobile genetic elements (viruses, transposable elements and conjugative plasmids). CRISPR clusters contain sequences complementary to antecedent mobile elements and target invading nucleic acids. CRISPR clusters are transcribed and processed into CRISPR RNA (crRNA). The Cas1-Cas2 complex is involved in CRISPR adaptation, the first stage of CRISPR immunity, being required for the addition/removal of CRISPR spacers at the leader end of the CRISPR locus. The Cas1-Cas2 complex introduces staggered nicks into both strands of the CRISPR array near the leader repeat and joins the 5'-ends of the repeat strands with the 3'-ends of the new spacer sequence. Spacer DNA integration requires supercoiled target DNA and 3'-OH ends on the inserted (spacer) DNA and probably initiates with a nucleophilic attack of the C 3'-OH end of the protospacer on the minus strand of the first repeat sequence. Expression of Cas1-Cas2 in a strain lacking both genes permits spacer acquisition. Non-specifically binds DNA; the Cas1-Cas2 complex preferentially binds CRISPR-locus DNA. Highest binding is seen to a dual forked DNA complex with 3'-overhangs and a protospacer-adjacent motif-complement specifically positioned. The protospacer DNA lies across a flat surface extending from 1 Cas1 dimer, across the Cas2 dimer and contacting the other Cas1 dimer; the 23 bp-long ds section of the DNA is bracketed by 1 Tyr-22 from each of the Cas1 dimers. Cas1 cuts within the 3'-overhang, to generate a 33-nucleotide DNA that is probably incorporated into the CRISPR leader by a cut-and-paste mechanism. Cas1 alone endonucleolytically cleaves linear ssRNA, ssDNA and short (34 base) dsDNA as well as branched DNA substrates such as Holliday junctions, replication forks and 5'-flap DNA substrates. In vitro catalyzes a concerted transesterification reaction on branched DNA, as would be expected during integration of protospacers into the CRISPR leader sequence; Cas2 is not required in vitro. This reaction requires a 3'-OH group at the branch point. Genetic interactions suggest Cas1 interacts with components of the RecBC and RuvB DNA repair systems. In Escherichia coli (strain K12), this protein is CRISPR-associated endonuclease Cas1 (ygbT).